The following is a 366-amino-acid chain: Terpene cyclase atmA (366 aa).

Transmembrane regions (helical) follow at residues 9-29, 84-104, 113-133, 162-182, 195-215, 233-253, 291-311, and 333-353; these read FLLL…NNGF, LTGL…VVHI, GMVI…GIVI, GLVV…SLPA, IAAW…HHLF, VYHF…SAFV, AGLF…TMVW, and ILRL…VRLI.

This sequence belongs to the membrane-bound ascI terpene cyclase family.

It localises to the membrane. Its function is as follows. Aflatrem synthesis protein A; part of the ATM2 gene cluster that mediates the biosynthesis of aflatrem, a tremorgenic mycotoxin with acute neurotoxic effects. Synthesis of geranylgeranyl diphosphate (GGPP) by AtmG (a GGPP synthase) precedes condensation of GGPP with indole 3-glycerol phosphate, followed by epoxidation and cyclization by AtmM (a FAD-dependent monooxygenase) and AtmC (a prenyltransferase) to produce paspaline. AtmB is also essential for paspaline production, but its exact role has not been identified yet. AtmP, a cytochrome P450 monooxygenase, subsequently converts paspaline to 13-desoxypaxilline via PC-M6 by removal of the C-30 methyl group and oxidation at C-10. AtmQ, a cytochrome P450 monooxygenase, then catalyzes the oxidation of 13-desoxypaxilline, first at C-7 to produce paspalicine and then at C-13 to form paspalinine. Finally, AtmD prenylates paspalinine to form aflatrem. The role of atmA in the aflatrem biosynthesis is still unknown. The chain is Terpene cyclase atmA from Aspergillus flavus.